The primary structure comprises 230 residues: UPF0173 metal-dependent hydrolase MM_2300 (230 aa).

The protein belongs to the UPF0173 family.

This chain is UPF0173 metal-dependent hydrolase MM_2300, found in Methanosarcina mazei (strain ATCC BAA-159 / DSM 3647 / Goe1 / Go1 / JCM 11833 / OCM 88) (Methanosarcina frisia).